Reading from the N-terminus, the 233-residue chain is Octanoyltransferase (233 aa).

In terms of domain architecture, BPL/LPL catalytic spans 36 to 211; it reads DTTPDEIWLV…EFTRQLGYPT (176 aa). Substrate contacts are provided by residues 75–82, 142–144, and 155–157; these read RGGQITYH, SLG, and GLA. Cysteine 173 (acyl-thioester intermediate) is an active-site residue.

Belongs to the LipB family.

Its subcellular location is the cytoplasm. The enzyme catalyses octanoyl-[ACP] + L-lysyl-[protein] = N(6)-octanoyl-L-lysyl-[protein] + holo-[ACP] + H(+). Its pathway is protein modification; protein lipoylation via endogenous pathway; protein N(6)-(lipoyl)lysine from octanoyl-[acyl-carrier-protein]: step 1/2. Functionally, catalyzes the transfer of endogenously produced octanoic acid from octanoyl-acyl-carrier-protein onto the lipoyl domains of lipoate-dependent enzymes. Lipoyl-ACP can also act as a substrate although octanoyl-ACP is likely to be the physiological substrate. In Yersinia pseudotuberculosis serotype O:1b (strain IP 31758), this protein is Octanoyltransferase.